We begin with the raw amino-acid sequence, 269 residues long: MSLEQKKGADIISKILQIQNSIGKTTSPSTLKTKLSEISRKEQENARIQSKLSDLQKKKIDIDNKLLKEKQNLIKEEILERKKLEVLTKKQQKDEIEHQKKLKREIDAIKASTQYITDVSISSYNNTIPETEPEYDLFISHASEDKEDFVRPLAETLQQLGVNVWYDEFTLKVGDSLRQKIDSGLRNSKYGTVVLSTDFIKKDWTNYELDGLVAREMNGHKMILPIWHKITKNDVLDYSPNLADKVALNTSVNSIEEIAHQLADVILNR.

Residues 31 to 99 (LKTKLSEISR…KQQKDEIEHQ (69 aa)) adopt a coiled-coil conformation. One can recognise a TIR domain in the interval 133–266 (PEYDLFISHA…EIAHQLADVI (134 aa)). Residues S143, K172, and K202 each coordinate NAD(+). The active site involves E208. K245 is a binding site for NAD(+).

As to quaternary structure, homodimer. In the presence of NAD(+) analog 8-amino-isoquinoline adenine dinucleotide (3AD) forms filaments with 3AD between monomers; conformational changes occur upon 3AD binding.

It catalyses the reaction NAD(+) = 2'cADPR + nicotinamide + H(+). The catalysed reaction is NAD(+) + H2O = ADP-D-ribose + nicotinamide + H(+). It carries out the reaction NADP(+) + H2O = ADP-D-ribose 2'-phosphate + nicotinamide + H(+). In terms of biological role, NAD(+) hydrolase (NADase) that catalyzes cleavage of NAD(+) into ADP-D-ribose (ADPR) and nicotinamide. In addition to ADPR, also generates a cyclization variant of cyclic ADPR (cADPR), termed 2'cADPR (v-cADPR). Cleaves NADP(+), but does not cyclize the product. In Acinetobacter baumannii (strain 1295743), this protein is 2' cyclic ADP-D-ribose synthase AbTIR.